A 97-amino-acid polypeptide reads, in one-letter code: Putative septation protein SpoVG (97 aa).

It belongs to the SpoVG family.

In terms of biological role, could be involved in septation. This is Putative septation protein SpoVG from Borreliella burgdorferi (strain ATCC 35210 / DSM 4680 / CIP 102532 / B31) (Borrelia burgdorferi).